A 107-amino-acid polypeptide reads, in one-letter code: Large ribosomal subunit protein eL33A (107 aa).

Residue Ala-2 is modified to N-acetylalanine; partial. Residue Lys-47 forms a Glycyl lysine isopeptide (Lys-Gly) (interchain with G-Cter in ubiquitin) linkage.

This sequence belongs to the eukaryotic ribosomal protein eL33 family. Component of the large ribosomal subunit (LSU). Mature yeast ribosomes consist of a small (40S) and a large (60S) subunit. The 40S small subunit contains 1 molecule of ribosomal RNA (18S rRNA) and 33 different proteins (encoded by 57 genes). The large 60S subunit contains 3 rRNA molecules (25S, 5.8S and 5S rRNA) and 46 different proteins (encoded by 81 genes). Post-translationally, N-terminally acetylated by acetyltransferase NatA.

The protein localises to the cytoplasm. Component of the ribosome, a large ribonucleoprotein complex responsible for the synthesis of proteins in the cell. The small ribosomal subunit (SSU) binds messenger RNAs (mRNAs) and translates the encoded message by selecting cognate aminoacyl-transfer RNA (tRNA) molecules. The large subunit (LSU) contains the ribosomal catalytic site termed the peptidyl transferase center (PTC), which catalyzes the formation of peptide bonds, thereby polymerizing the amino acids delivered by tRNAs into a polypeptide chain. The nascent polypeptides leave the ribosome through a tunnel in the LSU and interact with protein factors that function in enzymatic processing, targeting, and the membrane insertion of nascent chains at the exit of the ribosomal tunnel. This chain is Large ribosomal subunit protein eL33A, found in Saccharomyces cerevisiae (strain ATCC 204508 / S288c) (Baker's yeast).